A 453-amino-acid polypeptide reads, in one-letter code: Allantoinase (453 aa).

Residues His59, His61, Lys146, His186, His242, and Asp315 each contribute to the Zn(2+) site. At Lys146 the chain carries N6-carboxylysine.

Belongs to the metallo-dependent hydrolases superfamily. Allantoinase family. Homotetramer. Zn(2+) is required as a cofactor. Post-translationally, carboxylation allows a single lysine to coordinate two zinc ions.

The enzyme catalyses (S)-allantoin + H2O = allantoate + H(+). The protein operates within nitrogen metabolism; (S)-allantoin degradation; allantoate from (S)-allantoin: step 1/1. Functionally, catalyzes the conversion of allantoin (5-ureidohydantoin) to allantoic acid by hydrolytic cleavage of the five-member hydantoin ring. This chain is Allantoinase, found in Salmonella agona (strain SL483).